A 413-amino-acid polypeptide reads, in one-letter code: D-nopaline dehydrogenase (413 aa).

Belongs to the lysopine/nopaline/octopine/opine/vitopine dehydrogenases family. Homotetramer.

It carries out the reaction D-nopaline + NADP(+) + H2O = L-arginine + 2-oxoglutarate + NADPH + H(+). The chain is D-nopaline dehydrogenase (nos) from Agrobacterium tumefaciens (strain T37).